The following is a 187-amino-acid chain: Guanylate kinase (187 aa).

Serine 2 is modified (N-acetylserine). In terms of domain architecture, Guanylate kinase-like spans 2-184 (SRPIVISGPS…AYKELKDFIF (183 aa)). 9–16 (GPSGTGKS) lines the ATP pocket. Residues serine 35, 39-42 (RTPR), tyrosine 51, glutamate 70, 79-81 (YGS), and aspartate 101 each bind GMP. Serine 149 is subject to Phosphoserine. Tyrosine 157 carries the phosphotyrosine modification.

It belongs to the guanylate kinase family. Monomer.

It catalyses the reaction GMP + ATP = GDP + ADP. In terms of biological role, catalyzes the reversible transfer of the terminal phosphoryl group of ATP to the acceptor molecule GMP. Essential for recycling GMP and indirectly, cGMP. The chain is Guanylate kinase (GUK1) from Saccharomyces cerevisiae (strain ATCC 204508 / S288c) (Baker's yeast).